The following is a 27-amino-acid chain: Caerulein precursor fragment R5 (27 aa).

In terms of tissue distribution, expressed by the skin glands.

It localises to the secreted. Its function is as follows. Antimicrobial peptide. This is Caerulein precursor fragment R5 from Xenopus ruwenzoriensis (Uganda clawed frog).